Consider the following 85-residue polypeptide: MVVIRLARGGAKKRPFYQIVVTDSRNARDGRFIERIGFFNPTAQGQAEKLRLDADRFAHWVSQGAQPSERVASLAAQAKKAATAA.

The protein belongs to the bacterial ribosomal protein bS16 family.

The chain is Small ribosomal subunit protein bS16 from Acinetobacter baylyi (strain ATCC 33305 / BD413 / ADP1).